The sequence spans 217 residues: ATP phosphoribosyltransferase (217 aa).

Belongs to the ATP phosphoribosyltransferase family. Short subfamily. Heteromultimer composed of HisG and HisZ subunits.

It is found in the cytoplasm. The enzyme catalyses 1-(5-phospho-beta-D-ribosyl)-ATP + diphosphate = 5-phospho-alpha-D-ribose 1-diphosphate + ATP. It participates in amino-acid biosynthesis; L-histidine biosynthesis; L-histidine from 5-phospho-alpha-D-ribose 1-diphosphate: step 1/9. Functionally, catalyzes the condensation of ATP and 5-phosphoribose 1-diphosphate to form N'-(5'-phosphoribosyl)-ATP (PR-ATP). Has a crucial role in the pathway because the rate of histidine biosynthesis seems to be controlled primarily by regulation of HisG enzymatic activity. The polypeptide is ATP phosphoribosyltransferase (Burkholderia orbicola (strain AU 1054)).